The chain runs to 366 residues: Box C/D snoRNA protein 1 (366 aa).

Zn(2+) is bound by residues Cys-5, Cys-8, Cys-17, Cys-20, Cys-25, Cys-29, His-33, and Cys-39. The HIT-type zinc finger occupies 5 to 39 (CGVCGIKEFKYKCPRCLVQTCSLECSKKHKTRDNC). The interval 318–366 (DNAREEEDAEEDSQPTEEPVQKETQDASDSDSDSDDDYNPGLSMDFLTA) is disordered. Composition is skewed to acidic residues over residues 321-332 (REEEDAEEDSQP) and 343-355 (DASDSDSDSDDDY). Residue Ser-330 is modified to Phosphoserine.

The protein belongs to the BCD1 family.

Its subcellular location is the nucleus. Its function is as follows. Required for box C/D snoRNAs accumulation involved in snoRNA processing, snoRNA transport to the nucleolus and ribosome biogenesis. The sequence is that of Box C/D snoRNA protein 1 (BCD1) from Saccharomyces cerevisiae (strain ATCC 204508 / S288c) (Baker's yeast).